A 120-amino-acid chain; its full sequence is Large ribosomal subunit protein uL18 (120 aa).

Belongs to the universal ribosomal protein uL18 family. As to quaternary structure, part of the 50S ribosomal subunit; part of the 5S rRNA/L5/L18/L25 subcomplex. Contacts the 5S and 23S rRNAs.

This is one of the proteins that bind and probably mediate the attachment of the 5S RNA into the large ribosomal subunit, where it forms part of the central protuberance. The sequence is that of Large ribosomal subunit protein uL18 from Nitrobacter hamburgensis (strain DSM 10229 / NCIMB 13809 / X14).